A 264-amino-acid polypeptide reads, in one-letter code: Inner membrane ABC transporter permease protein YdcV (264 aa).

Residues 1–12 lie on the Cytoplasmic side of the membrane; that stretch reads MHSERAPFFLKL. Residues 13–33 form a helical membrane-spanning segment; that stretch reads AAWGGVVFLHFPILIIAAYAF. Residues 34-70 lie on the Periplasmic side of the membrane; the sequence is NTEDAAFSFPPQGLTLRWFSVAAQRSDILDAVTLSLK. The 188-residue stretch at 65–252 folds into the ABC transmembrane type-1 domain; it reads VTLSLKVAAL…MLVTTLPILG (188 aa). Residues 71–91 traverse the membrane as a helical segment; the sequence is VAALATLIALVLGTLAAAALW. The Cytoplasmic portion of the chain corresponds to 92 to 100; that stretch reads RRDFFGKNA. A helical membrane pass occupies residues 101–121; it reads ISLLLLLPIALPGIVTGLALL. Topologically, residues 122–128 are periplasmic; it reads TAFKTIN. Residues 129-149 form a helical membrane-spanning segment; the sequence is LEPGFFTIVVGHATFCVVVVF. The Cytoplasmic segment spans residues 150 to 189; the sequence is NNVIARFRRTSWSLVEASMDLGANGWQTFRYVVLPNLSSA. Residues 190-210 form a helical membrane-spanning segment; it reads LLAGGMLAFALSFDEIIVTTF. The Periplasmic segment spans residues 211-236; that stretch reads TAGHERTLPLWLLNQLGRPRDVPVTN. A helical transmembrane segment spans residues 237–257; it reads VVALLVMLVTTLPILGAWWLT. Topologically, residues 258–264 are cytoplasmic; the sequence is REGDNGQ.

This sequence belongs to the binding-protein-dependent transport system permease family. CysTW subfamily.

Its subcellular location is the cell inner membrane. Its function is as follows. Probably part of the ABC transporter complex YdcSTUV. Probably responsible for the translocation of the substrate across the membrane. This chain is Inner membrane ABC transporter permease protein YdcV (ydcV), found in Shigella flexneri.